We begin with the raw amino-acid sequence, 96 residues long: Protein RnfH (96 aa).

The protein belongs to the UPF0125 (RnfH) family.

In Hahella chejuensis (strain KCTC 2396), this protein is Protein RnfH.